The following is a 471-amino-acid chain: 5-hydroxytryptamine receptor 2A (471 aa).

The Extracellular segment spans residues 1–80 (MEILCEDNTS…LQEKNWSALL (80 aa)). N-linked (GlcNAc...) asparagine glycans are attached at residues Asn8, Asn38, Asn44, Asn51, and Asn54. The chain crosses the membrane as a helical span at residues 81–97 (TAVVIILTIAGNILVIM). At 98–111 (AVSLEKKLQNATNY) the chain is on the cytoplasmic side. The helical transmembrane segment at 112–137 (FLMSLAIADMLLGFLVMPVSMLTILY) threads the bilayer. At 138 to 146 (GYRWPLPSK) the chain is on the extracellular side. Residues 147–171 (LCAVWIYLDVLFSTASIMHLCAISL) traverse the membrane as a helical segment. An intrachain disulfide couples Cys148 to Cys227. Position 155 (Asp155) interacts with serotonin. The short motif at 172 to 174 (DRY) is the DRY motif; important for ligand-induced conformation changes element. At 172–191 (DRYVAIQNPIHHSRFNSRTK) the chain is on the cytoplasmic side. The helical transmembrane segment at 192–215 (AFLKIIAVWTISVGVSMPIPVFGL) threads the bilayer. Topologically, residues 216 to 232 (QDDSKVFKQGSCLLADD) are extracellular. A helical transmembrane segment spans residues 233-258 (NFVLIGSFVAFFIPLTIMVITYFLTI). Over 259-322 (KSLQKEATLC…QSISNEQKAC (64 aa)) the chain is Cytoplasmic. At Ser280 the chain carries Phosphoserine. The chain crosses the membrane as a helical span at residues 323–348 (KVLGIVFFLFVVMWCPFFITNIMAVI). Position 343 (Asn343) interacts with serotonin. Cys349 and Cys353 are disulfide-bonded. Topologically, residues 349 to 356 (CKESCNEH) are extracellular. The helical transmembrane segment at 357 to 382 (VIGALLNVFVWIGYLSSAVNPLVYTL) threads the bilayer. An NPxxY motif; important for ligand-induced conformation changes and signaling motif is present at residues 376 to 380 (NPLVY). Residues 383–471 (FNKTYRSAFS…NTVNEKVSCV (89 aa)) are Cytoplasmic-facing. The PDZ-binding signature appears at 469 to 471 (SCV).

This sequence belongs to the G-protein coupled receptor 1 family. As to quaternary structure, interacts (via C-terminus) with MPDZ and PATJ. May interact (via C-terminus) with MPP3, PRDX6, DLG4, DLG1, CASK, APBA1 and MAGI2. Interacts with GRM2 and DRD2; this may affect signaling.

It is found in the cell membrane. The protein resides in the cell projection. The protein localises to the dendrite. Its subcellular location is the axon. It localises to the cytoplasmic vesicle. It is found in the membrane. The protein resides in the caveola. The protein localises to the presynapse. Its activity is regulated as follows. G-protein coupled receptor activity is regulated by lipids: oleamide increases HTR2A-mediated activity. Functionally, G-protein coupled receptor for 5-hydroxytryptamine (serotonin). Also functions as a receptor for various drugs and psychoactive substances, including mescaline, psilocybin, 1-(2,5-dimethoxy-4-iodophenyl)-2-aminopropane (DOI) and lysergic acid diethylamide (LSD). Ligand binding causes a conformation change that triggers signaling via guanine nucleotide-binding proteins (G proteins) and modulates the activity of downstream effectors. HTR2A is coupled to G(q)/G(11) G alpha proteins and activates phospholipase C-beta, releasing diacylglycerol (DAG) and inositol 1,4,5-trisphosphate (IP3) second messengers that modulate the activity of phosphatidylinositol 3-kinase and promote the release of Ca(2+) ions from intracellular stores, respectively. Beta-arrestin family members inhibit signaling via G proteins and mediate activation of alternative signaling pathways. Affects neural activity, perception, cognition and mood. Plays a role in the regulation of behavior, including responses to anxiogenic situations and psychoactive substances. Plays a role in intestinal smooth muscle contraction, and may play a role in arterial vasoconstriction. The protein is 5-hydroxytryptamine receptor 2A (HTR2A) of Cricetulus griseus (Chinese hamster).